The chain runs to 81 residues: Sulfur carrier protein TusA (81 aa).

Cys-19 (cysteine persulfide intermediate) is an active-site residue.

This sequence belongs to the sulfur carrier protein TusA family.

Its subcellular location is the cytoplasm. In terms of biological role, sulfur carrier protein which probably makes part of a sulfur-relay system. The protein is Sulfur carrier protein TusA of Shewanella piezotolerans (strain WP3 / JCM 13877).